A 217-amino-acid polypeptide reads, in one-letter code: Urease accessory protein UreG (217 aa).

13–20 contacts GTP; it reads GPVGSGKT.

This sequence belongs to the SIMIBI class G3E GTPase family. UreG subfamily. As to quaternary structure, homodimer. UreD, UreF and UreG form a complex that acts as a GTP-hydrolysis-dependent molecular chaperone, activating the urease apoprotein by helping to assemble the nickel containing metallocenter of UreC. The UreE protein probably delivers the nickel.

Its subcellular location is the cytoplasm. In terms of biological role, facilitates the functional incorporation of the urease nickel metallocenter. This process requires GTP hydrolysis, probably effectuated by UreG. The chain is Urease accessory protein UreG from Frankia alni (strain DSM 45986 / CECT 9034 / ACN14a).